The following is a 367-amino-acid chain: GTP cyclohydrolase FolE2 (367 aa).

The protein belongs to the GTP cyclohydrolase IV family.

It carries out the reaction GTP + H2O = 7,8-dihydroneopterin 3'-triphosphate + formate + H(+). The protein operates within cofactor biosynthesis; 7,8-dihydroneopterin triphosphate biosynthesis; 7,8-dihydroneopterin triphosphate from GTP: step 1/1. In terms of biological role, converts GTP to 7,8-dihydroneopterin triphosphate. The polypeptide is GTP cyclohydrolase FolE2 (Ruegeria sp. (strain TM1040) (Silicibacter sp.)).